The primary structure comprises 434 residues: Gamma-glutamyl phosphate reductase (434 aa).

This sequence belongs to the gamma-glutamyl phosphate reductase family.

It localises to the cytoplasm. It catalyses the reaction L-glutamate 5-semialdehyde + phosphate + NADP(+) = L-glutamyl 5-phosphate + NADPH + H(+). It functions in the pathway amino-acid biosynthesis; L-proline biosynthesis; L-glutamate 5-semialdehyde from L-glutamate: step 2/2. In terms of biological role, catalyzes the NADPH-dependent reduction of L-glutamate 5-phosphate into L-glutamate 5-semialdehyde and phosphate. The product spontaneously undergoes cyclization to form 1-pyrroline-5-carboxylate. The protein is Gamma-glutamyl phosphate reductase of Trichormus variabilis (strain ATCC 29413 / PCC 7937) (Anabaena variabilis).